We begin with the raw amino-acid sequence, 745 residues long: Heterogeneous nuclear ribonucleoprotein U-like protein 2 (745 aa).

The SAP domain maps to 3-37 (VKRLKVTELRSELQRRGLDSRGLKMDLAQRLQEAL). Disordered stretches follow at residues 44–239 (DEAG…DEEE) and 625–664 (EEARKLLPPSEKRTNRRNNRNKRNRQNRSRGQGYVGGQRR). Positions 73-97 (GDEEEEDDDEEEDEEALLEDEDEEP) are enriched in acidic residues. The span at 142–161 (GEEHDNGKGEEDGPEERSGD) shows a compositional bias: basic and acidic residues. The residue at position 159 (Ser-159) is a Phosphoserine. Position 163 is a phosphothreonine (Thr-163). Residues Ser-166, Ser-183, Ser-186, Ser-224, and Ser-226 each carry the phosphoserine modification. Over residues 183 to 221 (SEKSKPAGSDGERRGVKRQRDEKDEHGRAYYEFREEAYH) the composition is skewed to basic and acidic residues. Residues 224-417 (SKSPPPPEEE…VELNFGQKEE (194 aa)) enclose the B30.2/SPRY domain. Residues 230 to 239 (PEEEAKDEEE) are compositionally biased toward acidic residues. The span at 625-637 (EEARKLLPPSEKR) shows a compositional bias: basic and acidic residues. The segment covering 638-652 (TNRRNNRNKRNRQNR) has biased composition (basic residues). Omega-N-methylarginine occurs at positions 654, 682, 736, and 745.

Binds to MLF1 and retains it in the nucleus.

Its subcellular location is the nucleus. In Mus musculus (Mouse), this protein is Heterogeneous nuclear ribonucleoprotein U-like protein 2 (Hnrnpul2).